Reading from the N-terminus, the 115-residue chain is Putative HNH nuclease YajD (115 aa).

Residues 27 to 75 (CGRCSREFVYSNLRELTVHHIDHDHTNNPEDGSNWELLCLYCHDHEHSK) enclose the HNH domain.

The protein belongs to the HNH nuclease family.

The polypeptide is Putative HNH nuclease YajD (yajD) (Escherichia coli O157:H7).